The sequence spans 341 residues: Malate dehydrogenase, mitochondrial (341 aa).

Residues 35–41 (GAAGGIG) and Asp-61 contribute to the NAD(+) site. Residues Arg-108 and Arg-114 each contribute to the substrate site. Residues Asn-121 and 144–146 (ITN) contribute to the NAD(+) site. Substrate contacts are provided by Asn-146 and Arg-180. His-204 acts as the Proton acceptor in catalysis. Residue Met-255 participates in NAD(+) binding.

It belongs to the LDH/MDH superfamily. MDH type 1 family. Homodimer.

It localises to the mitochondrion matrix. The catalysed reaction is (S)-malate + NAD(+) = oxaloacetate + NADH + H(+). Catalyzes the reversible conversion of (S)-malate to oxaloacetate in the citric acid cycle. In Caenorhabditis elegans, this protein is Malate dehydrogenase, mitochondrial.